The sequence spans 241 residues: Probable transcriptional regulatory protein Mpe_A1337 (241 aa).

The disordered stretch occupies residues 1–20 (MAGHSKWANIQHRKGRQDEK).

The protein belongs to the TACO1 family.

The protein resides in the cytoplasm. The sequence is that of Probable transcriptional regulatory protein Mpe_A1337 from Methylibium petroleiphilum (strain ATCC BAA-1232 / LMG 22953 / PM1).